Consider the following 315-residue polypeptide: DNA-directed RNA polymerase subunit alpha (315 aa).

Positions methionine 1–threonine 228 are alpha N-terminal domain (alpha-NTD). Positions aspartate 246–glutamate 315 are alpha C-terminal domain (alpha-CTD).

The protein belongs to the RNA polymerase alpha chain family. Homodimer. The RNAP catalytic core consists of 2 alpha, 1 beta, 1 beta' and 1 omega subunit. When a sigma factor is associated with the core the holoenzyme is formed, which can initiate transcription.

It carries out the reaction RNA(n) + a ribonucleoside 5'-triphosphate = RNA(n+1) + diphosphate. Its function is as follows. DNA-dependent RNA polymerase catalyzes the transcription of DNA into RNA using the four ribonucleoside triphosphates as substrates. The polypeptide is DNA-directed RNA polymerase subunit alpha (Desulforamulus reducens (strain ATCC BAA-1160 / DSM 100696 / MI-1) (Desulfotomaculum reducens)).